A 582-amino-acid chain; its full sequence is Phosphoribosylaminoimidazole carboxylase (582 aa).

Residues 114–305 (KKYLAERGVA…QFENHLRAIL (192 aa)) enclose the ATP-grasp domain. An ATP-binding site is contributed by 143–200 (AGRLGLPLMLKAKTLAYDGRGNSPLKSASSEDIQASLKFLGDRPLYAEGWAPFVKEVA).

This sequence in the C-terminal section; belongs to the AIR carboxylase family. Class I subfamily.

It catalyses the reaction 5-amino-1-(5-phospho-D-ribosyl)imidazole-4-carboxylate + H(+) = 5-amino-1-(5-phospho-beta-D-ribosyl)imidazole + CO2. Its pathway is purine metabolism; IMP biosynthesis via de novo pathway; 5-amino-1-(5-phospho-D-ribosyl)imidazole-4-carboxylate from 5-amino-1-(5-phospho-D-ribosyl)imidazole (carboxylase route): step 1/1. In Cryptococcus neoformans var. neoformans serotype D (strain B-3501A) (Filobasidiella neoformans), this protein is Phosphoribosylaminoimidazole carboxylase (ADE2).